Consider the following 435-residue polypeptide: Putative magnesium transporter MRS2-H (435 aa).

Residues 19-54 (FSSSPESRRCRSVHRVPSRPRPPLAPPARVMGKGNS) are disordered. Transmembrane regions (helical) follow at residues 369-389 (LTLI…AAFA) and 408-428 (FVGA…TYAW).

This sequence belongs to the CorA metal ion transporter (MIT) (TC 1.A.35.5) family.

It localises to the membrane. In terms of biological role, putative magnesium transporter. The protein is Putative magnesium transporter MRS2-H (MRS2-H) of Oryza sativa subsp. indica (Rice).